The primary structure comprises 643 residues: U3 small nucleolar RNA-associated protein 5 (643 aa).

6 WD repeats span residues 14-54, 55-98, 186-225, 227-266, 340-389, and 471-511; these read GQYL…LYLE, DSKL…VTYK, GHVSPVSTLQVITNEFFISGAEGDRFLNVYDIHSGMTKCV, VAESDIKELSHSGQADSIAVTTEDGSLEIFVDPLVSSSTK, SADR…LEQE, and RLKP…IHGG. The interval 565–643 is disordered; sequence HSSEPVVEED…EAGYSDVEME (79 aa). Residues 570–611 show a composition bias toward acidic residues; it reads VVEEDEDDVEYNEELDDAGLIEDGEESYGSEEEEEGDSDNEE. The span at 612–626 shows a compositional bias: basic and acidic residues; that stretch reads EQKHTSSKQDGRLET. Over residues 627–643 the composition is skewed to acidic residues; sequence EQSDGEEEAGYSDVEME.

The protein belongs to the UTP5 family. In terms of assembly, interacts with snoRNA U3. Interacts with MPP10. Component of the ribosomal small subunit (SSU) processome composed of at least 40 protein subunits and snoRNA U3. In the absence of snoRNA3, forms a complex with other t-UTPs. This complex can associate with pre-18S ribosomal RNAs.

It localises to the nucleus. It is found in the nucleolus. Involved in nucleolar processing of pre-18S ribosomal RNA. Required for optimal pre-ribosomal RNA transcription by RNA polymerase I together with a subset of U3 proteins required for transcription (t-UTPs). The chain is U3 small nucleolar RNA-associated protein 5 (UTP5) from Saccharomyces cerevisiae (strain ATCC 204508 / S288c) (Baker's yeast).